We begin with the raw amino-acid sequence, 358 residues long: Insulin gene enhancer protein ISL-2A (358 aa).

2 consecutive LIM zinc-binding domains span residues 27–80 (CVGC…CKRD) and 89–143 (CANC…RADH). A DNA-binding region (homeobox) is located at residues 190 to 249 (TTRVRTVLNEKQLHTLRTCYNANPRPDALMKEQLVEMTGLSPRVIRVWFQNKRCKDKKRS). A compositionally biased stretch (low complexity) spans 325-335 (ESGSMGNSSGS). The tract at residues 325-358 (ESGSMGNSSGSDVTSLSSQLPDTPNSMVASPVDT) is disordered. The segment covering 336-358 (DVTSLSSQLPDTPNSMVASPVDT) has biased composition (polar residues).

It localises to the nucleus. Its function is as follows. Binds to one of the cis-acting domain of the insulin gene enhancer. May be involved in subtype specialization of primary motoneurons. The polypeptide is Insulin gene enhancer protein ISL-2A (isl2a) (Oncorhynchus tshawytscha (Chinook salmon)).